Consider the following 1363-residue polypeptide: DNA-directed RNA polymerase subunit beta (1363 aa).

This sequence belongs to the RNA polymerase beta chain family. In terms of assembly, the RNAP catalytic core consists of 2 alpha, 1 beta, 1 beta' and 1 omega subunit. When a sigma factor is associated with the core the holoenzyme is formed, which can initiate transcription.

The catalysed reaction is RNA(n) + a ribonucleoside 5'-triphosphate = RNA(n+1) + diphosphate. Its function is as follows. DNA-dependent RNA polymerase catalyzes the transcription of DNA into RNA using the four ribonucleoside triphosphates as substrates. This Syntrophus aciditrophicus (strain SB) protein is DNA-directed RNA polymerase subunit beta.